A 142-amino-acid polypeptide reads, in one-letter code: Hemoglobin subunit alpha (142 aa).

The 141-residue stretch at 2 to 142 (VLSANDKSNV…VGNVLTSKYR (141 aa)) folds into the Globin domain. His59 contributes to the O2 binding site. His88 contacts heme b.

Belongs to the globin family. As to quaternary structure, heterotetramer of two alpha chains and two beta chains. As to expression, red blood cells.

Functionally, involved in oxygen transport from the lung to the various peripheral tissues. This is Hemoglobin subunit alpha (HBA) from Aptenodytes forsteri (Emperor penguin).